Reading from the N-terminus, the 176-residue chain is Ferritin, liver middle subunit (176 aa).

One can recognise a Ferritin-like diiron domain in the interval 7 to 156 (QNYHRDCEAA…DFITNLSRMD (150 aa)). Fe cation contacts are provided by Glu24, Glu59, His62, Glu104, and Gln138.

It belongs to the ferritin family. In terms of assembly, in liver, forms a heteromer consisting of middle and heavy subunits. The functional molecule forms a roughly spherical shell with a diameter of 12 nm and contains a central cavity into which the insoluble mineral iron core is deposited. As to expression, liver (at protein level).

It carries out the reaction 4 Fe(2+) + O2 + 4 H(+) = 4 Fe(3+) + 2 H2O. Its function is as follows. Stores iron in a soluble, non-toxic, readily available form. Important for iron homeostasis. Has ferroxidase activity. Iron is taken up in the ferrous form and deposited as ferric hydroxides after oxidation. The polypeptide is Ferritin, liver middle subunit (Trematomus bernacchii (Emerald rockcod)).